We begin with the raw amino-acid sequence, 430 residues long: Small ribosomal subunit protein uS3m (430 aa).

It belongs to the universal ribosomal protein uS3 family.

It localises to the mitochondrion. This is Small ribosomal subunit protein uS3m (RPS3) from Marchantia polymorpha (Common liverwort).